The sequence spans 360 residues: MILRRLFHVLPAFAFTLFILVLLDLQLRTRSDQKPQNAHDGHQRTTFISETTAENQHRDGAHEKEKAEGQKWTEVRSTPPLELSDIFIAVKTTGRFHKSRLALLLETWISETKEHTYIFTDSPDADISSEGFNVVVTNCSPEHSHQALSCKMAAEYDYFMASYKKWLCHVDDDNYLNPGALLSLLMAFPADGDIYVGKPSLDRPMRAQELLEGNKTRDVHFWFATGGAGFCLSRNLAERMAPWASGPRFEQTSAVIMLPDDCTVGFIVERRLGISMIHSNMFHSHLENLLLLSPSDIPKQVTLSYGWFESKMNSVELKGVFTKDEDPSRFRTVHCLLYPTTSWCPVALKSALSWNQHVMH.

At 1–5 (MILRR) the chain is on the cytoplasmic side. A helical; Signal-anchor for type II membrane protein transmembrane segment spans residues 6–26 (LFHVLPAFAFTLFILVLLDLQ). Over 27-360 (LRTRSDQKPQ…ALSWNQHVMH (334 aa)) the chain is Lumenal. Residues 51 to 74 (TTAENQHRDGAHEKEKAEGQKWTE) are disordered. Residues 55–74 (NQHRDGAHEKEKAEGQKWTE) are compositionally biased toward basic and acidic residues. Position 100 (Arg100) interacts with substrate. 2 disulfide bridges follow: Cys139–Cys150 and Cys168–Cys231. Asp172 is a binding site for substrate. Position 173 (Asp173) interacts with Mn(2+). A glycan (N-linked (GlcNAc...) asparagine) is linked at Asn214. Residue Asp261 is part of the active site. Residue His285 participates in Mn(2+) binding. Cysteines 335 and 344 form a disulfide.

The protein belongs to the glycosyltransferase 31 family. Mn(2+) serves as cofactor.

The protein localises to the golgi apparatus membrane. The catalysed reaction is 3-O-(alpha-L-fucosyl)-L-threonyl-[EGF-like domain protein] + UDP-N-acetyl-alpha-D-glucosamine = 3-O-(N-acetyl-beta-D-glucosaminyl-(1-&gt;3)-alpha-L-fucosyl)-L-threonyl-[EGF-like domain protein] + UDP + H(+). It catalyses the reaction 3-O-(alpha-L-fucosyl)-L-seryl-[EGF-like domain protein] + UDP-N-acetyl-alpha-D-glucosamine = 3-O-(N-acetyl-beta-D-glucosaminyl-(1-&gt;3)-alpha-L-fucosyl)-L-seryl-[EGF-like domain protein] + UDP + H(+). Functionally, glycosyltransferase that initiates the elongation of O-linked fucose residues attached to EGF-like repeats in the extracellular domain of Notch molecules. The protein is Beta-1,3-N-acetylglucosaminyltransferase manic fringe of Danio rerio (Zebrafish).